The following is a 65-amino-acid chain: MKTKDLREKSVEELKALLDEQQLNQFRLRMAKATGQLGKSHEVQVARKTIARIKTLLTEKQGNGQ.

The protein belongs to the universal ribosomal protein uL29 family.

This is Large ribosomal subunit protein uL29 from Acinetobacter baumannii (strain AB307-0294).